A 354-amino-acid chain; its full sequence is Arginase-2, mitochondrial (354 aa).

A mitochondrion-targeting transit peptide spans 1–22 (MSLRGSLSRLLQTRVHSILKKS). Residues H120, D143, H145, and D147 each contribute to the Mn(2+) site. Substrate is bound by residues 145–149 (HADIN), 156–158 (SGN), and D202. Residues D251 and D253 each contribute to the Mn(2+) site. Positions 265 and 296 each coordinate substrate. The segment at 334-354 (YDQLPTPSSPDESENQARVRI) is disordered.

The protein belongs to the arginase family. Homotrimer. Requires Mn(2+) as cofactor. In terms of tissue distribution, expressed most strongly in kidney and prostate, much less strongly in the brain, skeletal muscle, placenta, lung, mammary gland, macrophage, uterus, testis and gut, but apparently not in the liver, heart and pancreas. Expressed in activated T cells.

The protein resides in the mitochondrion. It carries out the reaction L-arginine + H2O = urea + L-ornithine. It functions in the pathway nitrogen metabolism; urea cycle; L-ornithine and urea from L-arginine: step 1/1. In terms of biological role, may play a role in the regulation of extra-urea cycle arginine metabolism and also in down-regulation of nitric oxide synthesis. Extrahepatic arginase functions to regulate L-arginine bioavailability to nitric oxid synthase (NOS). Arginine metabolism is a critical regulator of innate and adaptive immune responses. Seems to be involved in negative regulation of the survival capacity of activated CD4(+) and CD8(+) T cells. May suppress inflammation-related signaling in asthmatic airway epithelium. May contribute to the immune evasion of H.pylori by restricting M1 macrophage activation and polyamine metabolism. In fetal dendritic cells may play a role in promoting immune suppression and T cell TNF-alpha production during gestation. Regulates RPS6KB1 signaling, which promotes endothelial cell senescence and inflammation and implicates NOS3/eNOS dysfunction. Can inhibit endothelial autophagy independently of its enzymatic activity implicating mTORC2 signaling. Involved in vascular smooth muscle cell senescence and apoptosis independently of its enzymatic activity. Since NOS is found in the penile corpus cavernosum smooth muscle, the clitoral corpus cavernosum and the vagina, arginase-2 plays a role in both male and female sexual arousal. This Homo sapiens (Human) protein is Arginase-2, mitochondrial (ARG2).